A 444-amino-acid polypeptide reads, in one-letter code: MGRLFGTDGVRGVANRELTAELALALGAAAARQLASGSAPGRRVAVIGRDPRASGEMLEAAVIAGLTSQGVDALRVGVLPTPAVAYLTGAYDADFGVMISASHNPMPDNGIKIFGPGGHKLDDGTEDRIEALVGDAGPRPVGAGIGRVIDAEDAADRYLRHLSKASTLRLDGLTVVVDCAHGAASAVAPRAYRAAGARVIAINADPNGLNINDNCGSTHLDSLRAAVVAHRADLGLAHDGDADRCLAVDADGNLVDGDHIMVVLALAMREAGELASDTLVTTVMSNLGLHLAMRSAGITVRTTGVGDRYVVEELRAGDFSLGGEQSGHIVMPALGSTGDGIVTGLRLMTRMAQTGSPLSDLASAMQTLPQVLINVTVADKATAATAPSVQTAVGQAAAELGDTGRILLRPSGTEPMIRVMVEAPEKDIAQRLATRVAEAVSAAR.

Catalysis depends on S102, which acts as the Phosphoserine intermediate. Positions 102, 239, 241, and 243 each coordinate Mg(2+). S102 carries the phosphoserine modification.

The protein belongs to the phosphohexose mutase family. The cofactor is Mg(2+). Activated by phosphorylation.

It carries out the reaction alpha-D-glucosamine 1-phosphate = D-glucosamine 6-phosphate. Catalyzes the conversion of glucosamine-6-phosphate to glucosamine-1-phosphate. The polypeptide is Phosphoglucosamine mutase (Mycolicibacterium paratuberculosis (strain ATCC BAA-968 / K-10) (Mycobacterium paratuberculosis)).